Consider the following 862-residue polypeptide: FAS1 domain-containing protein YLR001C (862 aa).

The N-terminal stretch at 1 to 23 (MNMAIQTIKYIFWLLPILGLTQA) is a signal peptide. Over 24–762 (LLQNPGDDFP…KYHLRLPGIA (739 aa)) the chain is Vacuolar. One can recognise an FAS1 1 domain in the interval 34–162 (FSTVIDILSE…ASLQGINNLL (129 aa)). N-linked (GlcNAc...) asparagine glycosylation is found at Asn68, Asn112, Asn152, Asn200, Asn291, Asn333, Asn450, Asn521, Asn542, Asn569, Asn663, Asn679, and Asn688. 2 FAS1 domains span residues 463 to 604 (PGDL…DQLD) and 606 to 744 (PVDL…DKPI). The helical transmembrane segment at 763 to 783 (VGFGVIIGVTIAISLLFCIII) threads the bilayer. The Cytoplasmic portion of the chain corresponds to 784 to 862 (TRGGKVKDKN…QKGGRSVSTS (79 aa)).

Its subcellular location is the vacuole membrane. The chain is FAS1 domain-containing protein YLR001C from Saccharomyces cerevisiae (strain ATCC 204508 / S288c) (Baker's yeast).